The sequence spans 318 residues: Homoserine kinase (318 aa).

97–107 (PIGSGLGSSAC) contacts ATP.

Belongs to the GHMP kinase family. Homoserine kinase subfamily.

It is found in the cytoplasm. It carries out the reaction L-homoserine + ATP = O-phospho-L-homoserine + ADP + H(+). The protein operates within amino-acid biosynthesis; L-threonine biosynthesis; L-threonine from L-aspartate: step 4/5. Catalyzes the ATP-dependent phosphorylation of L-homoserine to L-homoserine phosphate. The polypeptide is Homoserine kinase (Vibrio cholerae serotype O1 (strain ATCC 39541 / Classical Ogawa 395 / O395)).